The sequence spans 528 residues: Biotin carboxylase 1, chloroplastic (528 aa).

A chloroplast-targeting transit peptide spans 1–51 (MEATLPVCKSVTSTPGLFMGKTSGIRSSQCSFMMGNKVNFPRQRAQTAHVH). ATP-binding positions include lysine 179, lysine 221, 227–228 (GG), 263–266 (EKYV), and histidine 271. The ATP-grasp domain maps to 183–380 (RETMKKAGVP…LIEEQIRVAM (198 aa)). Lysine 300 serves as a coordination point for hydrogencarbonate. Glutamate 338 and glutamate 351 together coordinate ATP. The Mg(2+) site is built by glutamate 338, glutamate 351, and asparagine 353. Mn(2+) is bound by residues glutamate 338, glutamate 351, and asparagine 353. The hydrogencarbonate site is built by arginine 355, valine 358, and arginine 401. Residue arginine 355 is part of the active site. Arginine 401 contributes to the biotin binding site.

In terms of assembly, acetyl-CoA carboxylase is a heterohexamer composed of biotin carboxyl carrier protein, biotin carboxylase and two subunits each of ACCase subunit alpha and ACCase plastid-coded subunit beta (accD). Mg(2+) is required as a cofactor. Requires Mn(2+) as cofactor.

The protein resides in the plastid. Its subcellular location is the chloroplast. The catalysed reaction is N(6)-biotinyl-L-lysyl-[protein] + hydrogencarbonate + ATP = N(6)-carboxybiotinyl-L-lysyl-[protein] + ADP + phosphate + H(+). The protein operates within lipid metabolism; malonyl-CoA biosynthesis; malonyl-CoA from acetyl-CoA: step 1/1. This protein is a component of the acetyl coenzyme A carboxylase complex; first, biotin carboxylase catalyzes the carboxylation of the carrier protein and then the transcarboxylase transfers the carboxyl group to form malonyl-CoA. This Populus trichocarpa (Western balsam poplar) protein is Biotin carboxylase 1, chloroplastic.